A 287-amino-acid polypeptide reads, in one-letter code: Lycopene elongase/hydratase (287 aa).

A run of 7 helical transmembrane segments spans residues 15–35 (ISWVNTAYPFGLAYLLNAGEI), 37–57 (WLFWLGIVFFLIPYNIAMYGI), 97–117 (IPFLVILFIFGTWMSSLWLTI), 137–157 (FIDALTSSTHFTSPALIGATI), 166–186 (MWIALGSFFLWGMASQILGAV), 218–238 (LLAAVLVTTLPNPAWIIGIAI), and 265–285 (VFLWLNYFVGAVITILLIAIH).

Belongs to the UbiA prenyltransferase family.

It localises to the cell membrane. It catalyses the reaction all-trans-lycopene + dimethylallyl diphosphate + A + H2O = nonaflavuxanthin + AH2 + diphosphate. The catalysed reaction is nonaflavuxanthin + dimethylallyl diphosphate + A + H2O = flavuxanthin + AH2 + diphosphate. It participates in carotenoid biosynthesis. Its function is as follows. Catalyzes the elongation of the C(40) carotenoid all-trans-lycopene to the acyclic C(50) carotenoid flavuxanthin during decaprenoxanthin biosynthesis. Acts as a bifunctional enzyme that catalyzes the elongation of lycopene by attaching a C(5) isoprene unit at C-2, as well as the hydroxylation of the new isoprene unit. The enzyme acts at both ends of the substrate, forming the C(50) carotenoid flavuxanthin via the C(45) intermediate nonaflavuxanthin. The protein is Lycopene elongase/hydratase of Corynebacterium glutamicum (Brevibacterium saccharolyticum).